We begin with the raw amino-acid sequence, 376 residues long: Calcium uniporter protein, mitochondrial (376 aa).

A mitochondrion-targeting transit peptide spans 1–34; sequence MAAKVCRSVLLLSRSSGAVASSAYPAFGVSSQRH. Topologically, residues 35 to 257 are mitochondrial matrix; it reads QGTKTEALSM…LSKKAERRTT (223 aa). The tract at residues 99 to 189 is N-terminal MCU domain; that stretch reads VSVVYQNGLP…TSYLVQPPRR (91 aa). Residues 213–254 adopt a coiled-coil conformation; it reads TLRIEEHQLNKERELIGRLEDLNSQLQPLEKVKEELSKKAER. A helical membrane pass occupies residues 258–280; it reads WVLWGGMAYMATQFGILARLTWW. Over 281 to 289 the chain is Mitochondrial intermembrane; it reads EYSWDIMEP. A Selectivity filter motif is present at residues 284-292; sequence WDIMEPVTY. Glutamate 288 provides a ligand contact to Ca(2+). Residues 290 to 309 traverse the membrane as a helical segment; it reads VTYFITYGTAMAMYAYFVLT. The juxtamembrane helix stretch occupies residues 309 to 314; that stretch reads TRQEYL. At 310–376 the chain is on the mitochondrial matrix side; the sequence is RQEYLYPDAR…PIQQIDTSKD (67 aa). Residues 336 to 363 adopt a coiled-coil conformation; the sequence is FDIEKYNKLKDAIAEAELDLKRLRDPLQ.

This sequence belongs to the MCU (TC 1.A.77) family. As to quaternary structure, homotetramer. Component of the uniplex complex.

The protein resides in the mitochondrion inner membrane. The catalysed reaction is Ca(2+)(in) = Ca(2+)(out). With respect to regulation, MCU channel activity is regulated by the heterodimer composed of micu1 and micu2, which act as calcium-sensors. At low calcium levels, micu1 occludes the pore of the MCU channel, preventing mitochondrial calcium uptake. At higher calcium levels, calcium-binding to micu1 and micu2 induces a conformational change that weakens mcu-micu1 interactions and moves the micu1-micu2 heterodimer away from the pore, allowing calcium permeation through the channel. MCU channel activity is gated by emre/smdt1 via the juxtamembrane helix loop. Inhibited by ruthenium red or its derivative Ru360. Channel-forming and calcium-conducting subunit of the mitochondrial inner membrane calcium uniporter complex (uniplex), which mediates calcium uptake into the mitochondrial matrix. Mcu channel activity is regulated by the calcium-sensor subunits of the uniplex micu1 and micu2. Mitochondrial calcium homeostasis plays key roles in cellular physiology and regulates ATP production, cytoplasmic calcium signals and activation of cell death pathways. Involved in buffering the amplitude of systolic calcium rises in cardiomyocytes. While dispensable for baseline homeostatic cardiac function, acts as a key regulator of short-term mitochondrial calcium loading underlying a 'fight-or-flight' response during acute stress: acts by mediating a rapid increase of mitochondrial calcium in pacemaker cells. Mitochondrial calcium uptake in skeletal muscle cells is involved in muscle size in adults. This is Calcium uniporter protein, mitochondrial from Danio rerio (Zebrafish).